Here is a 188-residue protein sequence, read N- to C-terminus: Putative manganese efflux pump MntP (188 aa).

6 helical membrane passes run 3–23, 41–61, 66–86, 107–129, 143–163, and 168–188; these read ITAT…ASIG, LIFG…GMLA, LEWN…RMII, LLVT…LAFL, ATLI…PLLG, and ILGG…HFHG.

This sequence belongs to the MntP (TC 9.B.29) family.

It localises to the cell inner membrane. In terms of biological role, probably functions as a manganese efflux pump. This is Putative manganese efflux pump MntP from Citrobacter koseri (strain ATCC BAA-895 / CDC 4225-83 / SGSC4696).